A 344-amino-acid chain; its full sequence is tRNA N6-adenosine threonylcarbamoyltransferase (344 aa).

The Fe cation site is built by H111 and H115. Residues 133-137 (LVSGG), D166, G179, and N283 each bind substrate. D311 is a binding site for Fe cation.

This sequence belongs to the KAE1 / TsaD family. Fe(2+) is required as a cofactor.

It localises to the cytoplasm. The enzyme catalyses L-threonylcarbamoyladenylate + adenosine(37) in tRNA = N(6)-L-threonylcarbamoyladenosine(37) in tRNA + AMP + H(+). Its function is as follows. Required for the formation of a threonylcarbamoyl group on adenosine at position 37 (t(6)A37) in tRNAs that read codons beginning with adenine. Is involved in the transfer of the threonylcarbamoyl moiety of threonylcarbamoyl-AMP (TC-AMP) to the N6 group of A37, together with TsaE and TsaB. TsaD likely plays a direct catalytic role in this reaction. This is tRNA N6-adenosine threonylcarbamoyltransferase from Orientia tsutsugamushi (strain Ikeda) (Rickettsia tsutsugamushi).